The sequence spans 596 residues: Transketolase-like protein 1 (596 aa).

His-46 contacts substrate. Thiamine diphosphate is bound by residues Ser-49 and 94–96 (GWL). Asp-126 serves as a coordination point for Mg(2+). 2 residues coordinate thiamine diphosphate: Gly-127 and Asn-156. 2 residues coordinate Mg(2+): Asn-156 and Leu-158. The thiamine diphosphate site is built by Lys-218 and His-232. Residues His-232, Arg-292, and Ser-319 each coordinate substrate. 2 residues coordinate thiamine diphosphate: Glu-340 and Phe-366. Residue Glu-340 is the Proton donor of the active site. His-390 and Asp-398 together coordinate substrate. Gln-402 contributes to the thiamine diphosphate binding site. Arg-448 is a binding site for substrate.

This sequence belongs to the transketolase family. As to quaternary structure, homodimer. Mg(2+) is required as a cofactor. Ca(2+) serves as cofactor. Requires Mn(2+) as cofactor. The cofactor is Co(2+). It depends on thiamine diphosphate as a cofactor.

It localises to the cytoplasm. It catalyses the reaction D-sedoheptulose 7-phosphate + D-glyceraldehyde 3-phosphate = aldehydo-D-ribose 5-phosphate + D-xylulose 5-phosphate. In terms of biological role, catalyzes the transfer of a two-carbon ketol group from a ketose donor to an aldose acceptor, via a covalent intermediate with the cofactor thiamine pyrophosphate. This chain is Transketolase-like protein 1 (TKTL1), found in Macaca fascicularis (Crab-eating macaque).